We begin with the raw amino-acid sequence, 288 residues long: Polyamine aminopropyltransferase (288 aa).

Positions 9–238 (ETLHDQFGQY…GIMTFAWATD (230 aa)) constitute a PABS domain. Gln-33 is a binding site for S-methyl-5'-thioadenosine. 2 residues coordinate spermidine: His-64 and Asp-88. Residues Glu-108 and 140–141 (DG) contribute to the S-methyl-5'-thioadenosine site. Asp-158 serves as the catalytic Proton acceptor. Spermidine is bound at residue 158–161 (DCTD). Residue Pro-165 participates in S-methyl-5'-thioadenosine binding.

The protein belongs to the spermidine/spermine synthase family. Homodimer or homotetramer.

Its subcellular location is the cytoplasm. It catalyses the reaction S-adenosyl 3-(methylsulfanyl)propylamine + putrescine = S-methyl-5'-thioadenosine + spermidine + H(+). Its pathway is amine and polyamine biosynthesis; spermidine biosynthesis; spermidine from putrescine: step 1/1. In terms of biological role, catalyzes the irreversible transfer of a propylamine group from the amino donor S-adenosylmethioninamine (decarboxy-AdoMet) to putrescine (1,4-diaminobutane) to yield spermidine. The sequence is that of Polyamine aminopropyltransferase from Escherichia fergusonii (strain ATCC 35469 / DSM 13698 / CCUG 18766 / IAM 14443 / JCM 21226 / LMG 7866 / NBRC 102419 / NCTC 12128 / CDC 0568-73).